Consider the following 113-residue polypeptide: Large ribosomal subunit protein uL22 (113 aa).

It belongs to the universal ribosomal protein uL22 family. Part of the 50S ribosomal subunit.

In terms of biological role, this protein binds specifically to 23S rRNA; its binding is stimulated by other ribosomal proteins, e.g. L4, L17, and L20. It is important during the early stages of 50S assembly. It makes multiple contacts with different domains of the 23S rRNA in the assembled 50S subunit and ribosome. Its function is as follows. The globular domain of the protein is located near the polypeptide exit tunnel on the outside of the subunit, while an extended beta-hairpin is found that lines the wall of the exit tunnel in the center of the 70S ribosome. In Xylella fastidiosa (strain M12), this protein is Large ribosomal subunit protein uL22.